The primary structure comprises 479 residues: Poly(A) polymerase catalytic subunit (479 aa).

Residues Asp202 and Asp204 contribute to the active site. The Ca(2+) site is built by Asp202, Asp204, and Asp253.

It belongs to the poxviridae poly(A) polymerase catalytic subunit family. Heterodimer of a large (catalytic) subunit and a small (regulatory) subunit.

It catalyses the reaction RNA(n) + ATP = RNA(n)-3'-adenine ribonucleotide + diphosphate. Functionally, polymerase that creates the 3'-poly(A) tail of mRNA's. This Cynomys gunnisoni (Gunnison's prairie dog) protein is Poly(A) polymerase catalytic subunit (OPG063).